The primary structure comprises 574 residues: Ribonuclease Y (574 aa).

The helical transmembrane segment at 1 to 21 (MSLLDLVLLLLVLGLGGVLLL) threads the bilayer. A KH domain is found at 264–327 (AVTVVPIPSD…EIARMALEEL (64 aa)). The 94-residue stretch at 390 to 483 (VLKHSIQVAH…VAAADALSAA (94 aa)) folds into the HD domain.

The protein belongs to the RNase Y family.

Its subcellular location is the cell membrane. Functionally, endoribonuclease that initiates mRNA decay. The chain is Ribonuclease Y from Thermus thermophilus (strain ATCC 27634 / DSM 579 / HB8).